The sequence spans 307 residues: D-alanine--D-alanine ligase (307 aa).

The 200-residue stretch at 105-304 (KMLWKGFGLP…FEQLVVKILE (200 aa)) folds into the ATP-grasp domain. An ATP-binding site is contributed by 135-190 (VERLGLPLMVKPSREGSSVGLTKVNAVEELKNAVDLALTHDDTVLIEEWLSGIEMT). 3 residues coordinate Mg(2+): D258, E271, and N273.

Belongs to the D-alanine--D-alanine ligase family. It depends on Mg(2+) as a cofactor. Mn(2+) is required as a cofactor.

The protein resides in the cytoplasm. It catalyses the reaction 2 D-alanine + ATP = D-alanyl-D-alanine + ADP + phosphate + H(+). Its pathway is cell wall biogenesis; peptidoglycan biosynthesis. In terms of biological role, cell wall formation. In Mannheimia succiniciproducens (strain KCTC 0769BP / MBEL55E), this protein is D-alanine--D-alanine ligase.